The primary structure comprises 68 residues: Conotoxin Cal14.13c (68 aa).

Residues 1-20 (MKLCVVXVLLMLAMPFNGGE) form the signal peptide. A propeptide spanning residues 21-68 (ASRFFNQHARSQRSGMKTRGIWCDPPCPEGETCRGGECSDEFNGDLGG) is cleaved from the precursor. Leucine amide is present on leucine 66.

In terms of processing, contains 2 disulfide bonds. In terms of tissue distribution, expressed by the venom duct.

It is found in the secreted. Functionally, probable neurotoxin with unknown target. Possibly targets ion channels. This is Conotoxin Cal14.13c from Californiconus californicus (California cone).